A 133-amino-acid chain; its full sequence is Ribosomal RNA large subunit methyltransferase H 1 (133 aa).

Residues Ile-55, Gly-89, and 101–106 (ISPMEM) contribute to the S-adenosyl-L-methionine site.

This sequence belongs to the RNA methyltransferase RlmH family. In terms of assembly, homodimer.

Its subcellular location is the cytoplasm. The catalysed reaction is pseudouridine(1915) in 23S rRNA + S-adenosyl-L-methionine = N(3)-methylpseudouridine(1915) in 23S rRNA + S-adenosyl-L-homocysteine + H(+). Specifically methylates the pseudouridine at position 1915 (m3Psi1915) in 23S rRNA. This Thermoanaerobacter sp. (strain X514) protein is Ribosomal RNA large subunit methyltransferase H 1.